We begin with the raw amino-acid sequence, 502 residues long: Glutamate--tRNA ligase (502 aa).

The 'HIGH' region signature appears at 12 to 22 (PSPTGYLHVGG). The 'KMSKS' region signature appears at 259–263 (KLSKR). Lysine 262 contributes to the ATP binding site.

Belongs to the class-I aminoacyl-tRNA synthetase family. Glutamate--tRNA ligase type 1 subfamily. Monomer.

Its subcellular location is the cytoplasm. The enzyme catalyses tRNA(Glu) + L-glutamate + ATP = L-glutamyl-tRNA(Glu) + AMP + diphosphate. Its function is as follows. Catalyzes the attachment of glutamate to tRNA(Glu) in a two-step reaction: glutamate is first activated by ATP to form Glu-AMP and then transferred to the acceptor end of tRNA(Glu). The protein is Glutamate--tRNA ligase of Pelodictyon phaeoclathratiforme (strain DSM 5477 / BU-1).